Here is a 345-residue protein sequence, read N- to C-terminus: Beta-2-glycoprotein 1 (345 aa).

A signal peptide spans 1 to 19 (MISPVLILFSSFLCHVAIA). Sushi domains are found at residues 21–81 (RTCP…KCTP), 82–139 (RVCP…VCAP), 140–202 (ITCP…ECRE), and 203–262 (VKCP…SCKA). Intrachain disulfides connect cysteine 23-cysteine 66, cysteine 51-cysteine 79, cysteine 84-cysteine 124, cysteine 110-cysteine 137, cysteine 142-cysteine 188, cysteine 174-cysteine 200, cysteine 205-cysteine 248, cysteine 234-cysteine 260, cysteine 264-cysteine 315, cysteine 300-cysteine 325, and cysteine 307-cysteine 345. Threonine 33 carries an O-linked (GalNAc...) threonine glycan. An O-linked (GalNAc...) threonine glycan is attached at threonine 149. 3 N-linked (GlcNAc...) asparagine glycosylation sites follow: asparagine 162, asparagine 183, and asparagine 193. The N-linked (GlcNAc...) asparagine glycan is linked to asparagine 253. Residues 263-345 (SCKVPVKKAT…KTDASDVKPC (83 aa)) form a sushi-like region.

In terms of tissue distribution, expressed by the liver and secreted in plasma.

The protein resides in the secreted. Its function is as follows. Binds to various kinds of negatively charged substances such as heparin, phospholipids, and dextran sulfate. May prevent activation of the intrinsic blood coagulation cascade by binding to phospholipids on the surface of damaged cells. This chain is Beta-2-glycoprotein 1 (APOH), found in Pan troglodytes (Chimpanzee).